The following is a 278-amino-acid chain: Biotin synthase (278 aa).

One can recognise a Radical SAM core domain in the interval 1 to 227; that stretch reads MQIMLCAISN…NAHIMVAGGR (227 aa). [4Fe-4S] cluster contacts are provided by cysteine 16, cysteine 20, and cysteine 23. [2Fe-2S] cluster is bound by residues cysteine 60, cysteine 95, and cysteine 153.

Belongs to the radical SAM superfamily. Biotin synthase family. Homodimer. [4Fe-4S] cluster is required as a cofactor. [2Fe-2S] cluster serves as cofactor.

It catalyses the reaction (4R,5S)-dethiobiotin + (sulfur carrier)-SH + 2 reduced [2Fe-2S]-[ferredoxin] + 2 S-adenosyl-L-methionine = (sulfur carrier)-H + biotin + 2 5'-deoxyadenosine + 2 L-methionine + 2 oxidized [2Fe-2S]-[ferredoxin]. The protein operates within cofactor biosynthesis; biotin biosynthesis; biotin from 7,8-diaminononanoate: step 2/2. In terms of biological role, catalyzes the conversion of dethiobiotin (DTB) to biotin by the insertion of a sulfur atom into dethiobiotin via a radical-based mechanism. The polypeptide is Biotin synthase (Campylobacter lari (strain RM2100 / D67 / ATCC BAA-1060)).